Reading from the N-terminus, the 86-residue chain is Weak toxin 2 (86 aa).

Residues 1–23 (MKTLLLTLVVVAIVCLDLGYTLT) form the signal peptide. Cystine bridges form between cysteine 24–cysteine 45, cysteine 27–cysteine 32, cysteine 38–cysteine 63, cysteine 67–cysteine 78, and cysteine 79–cysteine 84.

The protein belongs to the three-finger toxin family. Ancestral subfamily. Orphan group II sub-subfamily. As to expression, expressed by the venom gland.

The protein localises to the secreted. Functionally, binds with low affinity to muscular (alpha-1-beta-1-delta-epsilon/CHRNA1-CHRNB1-CHRND-CHRNE) and very low affinity to neuronal (alpha-7/CHRNA7) nicotinic acetylcholine receptor (nAChR). In Bungarus candidus (Malayan krait), this protein is Weak toxin 2.